The primary structure comprises 197 residues: C4-dicarboxylate transport transcriptional regulatory protein DctR (197 aa).

Positions 4 to 120 (TVHIVDDEES…HIVDIALSAI (117 aa)) constitute a Response regulatory domain. D53 carries the 4-aspartylphosphate modification. The segment at 128–135 (AEAQAREA) is inter-domain linker. The HTH luxR-type domain occupies 136–197 (VAARRASLSA…RNIADLARMT (62 aa)). Positions 160 to 179 (NKQIAERLGIAMRTVEVHRS) form a DNA-binding region, H-T-H motif.

Post-translationally, phosphorylated by DctS.

The protein localises to the cytoplasm. In terms of biological role, member of the two-component regulatory system DctS/DctR involved in the transport of C4-dicarboxylates. DctR functions as a transcriptional repressor of genes for C4-dicarboxylate transport. The sequence is that of C4-dicarboxylate transport transcriptional regulatory protein DctR (dctR) from Rhodobacter capsulatus (Rhodopseudomonas capsulata).